A 304-amino-acid polypeptide reads, in one-letter code: Endonuclease III-like protein 1 (304 aa).

A mitochondrion-targeting transit peptide spans 1–22 (MTALSARMLTRSRSLGPGAGPR). Residues 1 to 72 (MTALSARMLT…SDSEKGEGAE (72 aa)) are disordered. The segment covering 23–42 (GCREEPGPLRRREAAAEARK) has biased composition (basic and acidic residues). Residues 28–52 (PGPLRRREAAAEARKSHSPVKRPRK) carry the Bipartite nuclear localization signal motif. Residues 43 to 55 (SHSPVKRPRKAQR) are compositionally biased toward basic residues. Phosphoserine is present on residues serine 63 and serine 65. Residues 191 to 215 (HYGGDIPASVAELVALPGVGPKMAH) form the HhH domain. Lysine 212 (nucleophile; for N-glycosylase activity) is an active-site residue. Cysteine 282, cysteine 289, cysteine 292, and cysteine 298 together coordinate [4Fe-4S] cluster.

The protein belongs to the Nth/MutY family. In terms of assembly, interacts with YBX1. Interacts with ERCC5/XPG; the interaction stimulates NTHL1 activity and NTHL1 binding to its DNA substrate. The cofactor is [4Fe-4S] cluster. Post-translationally, ubiquitinated by TRIM26; leading to proteasomal degradation. In terms of tissue distribution, widely expressed with highest levels in heart and lowest levels in lung and liver.

The protein localises to the nucleus. The protein resides in the mitochondrion. It catalyses the reaction 2'-deoxyribonucleotide-(2'-deoxyribose 5'-phosphate)-2'-deoxyribonucleotide-DNA = a 3'-end 2'-deoxyribonucleotide-(2,3-dehydro-2,3-deoxyribose 5'-phosphate)-DNA + a 5'-end 5'-phospho-2'-deoxyribonucleoside-DNA + H(+). Its activity is regulated as follows. APE1 displaces NTHL1 from the N-glycosylase-generated AP site in DNA, thereby increasing the turnover of the DNA N-glycosylase activity. AP lyase activity is stimulated by YBX1. ERCC5/XPG stimulates NTHL1 activity and NTHL1 binding to its DNA substrate. Its function is as follows. Bifunctional DNA N-glycosylase with associated apurinic/apyrimidinic (AP) lyase function that catalyzes the first step in base excision repair (BER), the primary repair pathway for the repair of oxidative DNA damage. The DNA N-glycosylase activity releases the damaged DNA base from DNA by cleaving the N-glycosidic bond, leaving an AP site. The AP-lyase activity cleaves the phosphodiester bond 3' to the AP site by a beta-elimination. Primarily recognizes and repairs oxidative base damage of pyrimidines. Also has 8-oxo-7,8-dihydroguanine (8-oxoG) DNA glycosylase activity. Acts preferentially on DNA damage opposite guanine residues in DNA. Is able to process lesions in nucleosomes without requiring or inducing nucleosome disruption. This Homo sapiens (Human) protein is Endonuclease III-like protein 1.